Consider the following 158-residue polypeptide: Cyclic pyranopterin monophosphate synthase (158 aa).

Residues 76–78 and 114–115 contribute to the substrate site; these read LCH and ME. Asp129 is an active-site residue.

It belongs to the MoaC family. As to quaternary structure, homohexamer; trimer of dimers.

It catalyses the reaction (8S)-3',8-cyclo-7,8-dihydroguanosine 5'-triphosphate = cyclic pyranopterin phosphate + diphosphate. It participates in cofactor biosynthesis; molybdopterin biosynthesis. Catalyzes the conversion of (8S)-3',8-cyclo-7,8-dihydroguanosine 5'-triphosphate to cyclic pyranopterin monophosphate (cPMP). This chain is Cyclic pyranopterin monophosphate synthase, found in Shewanella sediminis (strain HAW-EB3).